A 404-amino-acid chain; its full sequence is Adenylosuccinate synthetase (404 aa).

GTP is bound by residues 12-18 (GDEGKGK) and 40-42 (GHT). The active-site Proton acceptor is the aspartate 13. Residues aspartate 13 and glycine 40 each coordinate Mg(2+). Residues 13 to 16 (DEGK), 38 to 41 (NAGH), threonine 121, arginine 135, glutamine 213, threonine 228, and arginine 296 each bind IMP. Histidine 41 functions as the Proton donor in the catalytic mechanism. 292 to 298 (TTTGRAR) lines the substrate pocket. GTP-binding positions include arginine 298, 324–326 (KMD), and 389–391 (SCG).

This sequence belongs to the adenylosuccinate synthetase family. In terms of assembly, homodimer. It depends on Mg(2+) as a cofactor.

The protein localises to the cytoplasm. It catalyses the reaction IMP + L-aspartate + GTP = N(6)-(1,2-dicarboxyethyl)-AMP + GDP + phosphate + 2 H(+). It participates in purine metabolism; AMP biosynthesis via de novo pathway; AMP from IMP: step 1/2. Functionally, plays an important role in the de novo pathway of purine nucleotide biosynthesis. Catalyzes the first committed step in the biosynthesis of AMP from IMP. This is Adenylosuccinate synthetase from Deinococcus geothermalis (strain DSM 11300 / CIP 105573 / AG-3a).